The chain runs to 150 residues: 3-dehydroquinate dehydratase (150 aa).

Catalysis depends on Y23, which acts as the Proton acceptor. Residues N75, H81, and D88 each coordinate substrate. H101 (proton donor) is an active-site residue. Substrate-binding positions include 102 to 103 and R112; that span reads LS.

It belongs to the type-II 3-dehydroquinase family. In terms of assembly, homododecamer.

The enzyme catalyses 3-dehydroquinate = 3-dehydroshikimate + H2O. It participates in metabolic intermediate biosynthesis; chorismate biosynthesis; chorismate from D-erythrose 4-phosphate and phosphoenolpyruvate: step 3/7. Functionally, catalyzes a trans-dehydration via an enolate intermediate. This Pseudomonas savastanoi pv. phaseolicola (strain 1448A / Race 6) (Pseudomonas syringae pv. phaseolicola (strain 1448A / Race 6)) protein is 3-dehydroquinate dehydratase.